Reading from the N-terminus, the 410-residue chain is Lissencephaly-1 homolog (410 aa).

Residues 7 to 39 (QRDELNRAIADYLRSNGYEEAYSTFKKEAELDN) form the LisH domain. Residues 32-82 (KKEAELDNNEELDKKYAGLLEKKWTSVIRLQKKVMELESKLNEAKEEITLG) are a coiled coil. WD repeat units lie at residues 106–147 (GHRS…RTLK), 148–189 (GHTD…RTMH), 190–229 (GHDH…CVKT), 232–271 (GHRE…CKAE), 274–333 (EHEH…CLMT), 336–375 (GHDN…CMKT), and 378–410 (AHEH…WECR).

It belongs to the WD repeat LIS1/nudF family. Can self-associate. Component of the cytosolic PAF-AH (I) heterotetrameric enzyme, which is composed of PAFAH1B1 (beta), PAFAH1B2 (alpha2) and PAFAH1B3 (alpha1) subunits. The catalytic activity of the enzyme resides in the alpha1 (PAFAH1B3) and alpha2 (PAFAH1B2) subunits, whereas the beta subunit (PAFAH1B1) has regulatory activity. Trimer formation is not essential for the catalytic activity. Interacts with dynein, dynactin, nde1 and ndel1.

It localises to the cytoplasm. It is found in the cytoskeleton. Its subcellular location is the microtubule organizing center. The protein localises to the centrosome. Regulatory subunit (beta subunit) of the cytosolic type I platelet-activating factor (PAF) acetylhydrolase (PAF-AH (I)), an enzyme that catalyzes the hydrolyze of the acetyl group at the sn-2 position of PAF and its analogs and participates in the PAF inactivation. Positively regulates the activity of the minus-end directed microtubule motor protein dynein. May enhance dynein-mediated microtubule sliding by targeting dynein to the microtubule plus end. Required for several dynein- and microtubule-dependent processes such as the maintenance of Golgi integrity, the peripheral transport of microtubule fragments and the coupling of the nucleus and centrosome. May be required for proliferation of neuronal precursors and neuronal migration. The polypeptide is Lissencephaly-1 homolog (pafah1b1) (Tetraodon nigroviridis (Spotted green pufferfish)).